The sequence spans 1553 residues: Dual oxidase 1 (1553 aa).

Positions 1-21 are cleaved as a signal peptide; that stretch reads MGFRLALAWTLLVGPWMPMGA. Residues 22-596 lie on the Extracellular side of the membrane; sequence RNSISWEVQR…YFKGSGFGFG (575 aa). The peroxidase-like; mediates peroxidase activity stretch occupies residues 26 to 593; that stretch reads SWEVQRFDGW…MRDYFKGSGF (568 aa). N94, N342, N354, and N534 each carry an N-linked (GlcNAc...) asparagine glycan. Residues 597–617 form a helical membrane-spanning segment; sequence VTIGTLCCFPLVSLLSAWIVA. Residues 618 to 1046 lie on the Cytoplasmic side of the membrane; it reads QLRRRNFKRL…KRFVENYRRH (429 aa). EF-hand domains follow at residues 815-850, 851-886, and 895-930; these read PQDM…FMKG, SPEE…FIEI, and QLTE…HDSE. Ca(2+)-binding residues include D828, D830, N832, Y834, E839, D864, D866, N868, and E875. An interaction with TXNDC11 region spans residues 956–1250; sequence YISQEKLCPS…GSFALIQLPR (295 aa). Residues 1047–1067 form a helical membrane-spanning segment; the sequence is IGCLAVFYTIAGGLFLERAYY. Residues 1068 to 1082 lie on the Extracellular side of the membrane; sequence YAFAAHHMGITDTTR. A helical transmembrane segment spans residues 1083 to 1103; that stretch reads VGIILSRGTAASISFMFSYIL. In terms of domain architecture, Ferric oxidoreductase spans 1089–1271; it reads RGTAASISFM…YVGDKLVSLS (183 aa). At 1104–1138 the chain is on the cytoplasmic side; sequence LTMCRNLITFLRETFLNRYVPFDAAVDFHRLIAST. Residues 1139–1159 form a helical membrane-spanning segment; sequence AIILTVLHSAGHVVNVYLFSI. Topologically, residues 1160-1190 are extracellular; it reads SPLSVLSCLFPGLFHDNGSEFPQKYYWWFFQ. A helical membrane pass occupies residues 1191-1211; sequence TVPGLTGVMLLLILAIMYVFA. Residues 1212-1228 lie on the Cytoplasmic side of the membrane; sequence SHHFRRCSFRGFWLTHH. Residues 1229–1249 traverse the membrane as a helical segment; sequence LYILLYMLLIIHGSFALIQLP. Residue R1250 is a topological domain, extracellular. The chain crosses the membrane as a helical span at residues 1251–1271; sequence FHIFFLVPALIYVGDKLVSLS. The 107-residue stretch at 1272–1378 folds into the FAD-binding FR-type domain; the sequence is RKKVEISVVK…DGPFGEGHQE (107 aa). Residues 1272-1553 lie on the Cytoplasmic side of the membrane; it reads RKKVEISVVK…THFSHHYENF (282 aa).

This sequence in the N-terminal section; belongs to the peroxidase family. As to quaternary structure, interacts with TXNDC11, TPO and CYBA. Post-translationally, N-glycosylated. In terms of tissue distribution, specifically expressed in thyroid.

The protein resides in the apical cell membrane. It carries out the reaction NADH + O2 + H(+) = H2O2 + NAD(+). The enzyme catalyses NADPH + O2 + H(+) = H2O2 + NADP(+). Its pathway is hormone biosynthesis; thyroid hormone biosynthesis. Its activity is regulated as follows. The NADPH oxidase activity is calcium-dependent. Peroxidase activity is inhibited by aminobenzohydrazide. Its function is as follows. Generates hydrogen peroxide which is required for the activity of thyroid peroxidase/TPO and lactoperoxidase/LPO. Plays a role in thyroid hormones synthesis and lactoperoxidase-mediated antimicrobial defense at the surface of mucosa. May have its own peroxidase activity through its N-terminal peroxidase-like domain. This chain is Dual oxidase 1 (DUOX1), found in Sus scrofa (Pig).